The chain runs to 160 residues: Suppressyn (160 aa).

Positions 1 to 39 (MACIYPTTFYTSLPTKSLNMGISLTTILILSVAVLLSTA) are cleaved as a signal peptide. A disordered region spans residues 137 to 160 (AKASKPTTPPENRPRHFHSFIQKL).

As to quaternary structure, interacts (secreted) with SLC1A5; mainly at cell surface. As to expression, specifically expressed in placenta by extravillous trophoblasts and syncytiotrophoblasts (at protein level).

The protein localises to the secreted. In terms of biological role, may play a role in trophoblasts syncytialization, the spontaneous fusion of their plasma membranes, an essential process in placental development. May negatively regulate cell-cell fusion by interacting with SLC1A5, the probable receptor on the cell surface of the fusogenic syncytin-1/ERVW-1. The sequence is that of Suppressyn (ERVH48-1) from Homo sapiens (Human).